A 194-amino-acid polypeptide reads, in one-letter code: FMN-dependent NADH:quinone oxidoreductase (194 aa).

Residues serine 10 and 90–93 (MYNL) contribute to the FMN site.

It belongs to the azoreductase type 1 family. In terms of assembly, homodimer. It depends on FMN as a cofactor.

The catalysed reaction is 2 a quinone + NADH + H(+) = 2 a 1,4-benzosemiquinone + NAD(+). The enzyme catalyses N,N-dimethyl-1,4-phenylenediamine + anthranilate + 2 NAD(+) = 2-(4-dimethylaminophenyl)diazenylbenzoate + 2 NADH + 2 H(+). Its function is as follows. Quinone reductase that provides resistance to thiol-specific stress caused by electrophilic quinones. In terms of biological role, also exhibits azoreductase activity. Catalyzes the reductive cleavage of the azo bond in aromatic azo compounds to the corresponding amines. In Haemophilus influenzae (strain PittEE), this protein is FMN-dependent NADH:quinone oxidoreductase.